A 473-amino-acid polypeptide reads, in one-letter code: Cannabinoid receptor 1 (473 aa).

Over 1-118 the chain is Extracellular; the sequence is MKSILDGLAD…CFMILTASQQ (118 aa). Residues 2–23 are required for mitochondrial localization; that stretch reads KSILDGLADTTFRTITTDLLYM. N-linked (GlcNAc...) asparagine glycans are attached at residues N79 and N85. A helical membrane pass occupies residues 119–144; it reads LIIAVLSLTLGTFTVLENFLVLCVIL. The Cytoplasmic segment spans residues 145–156; that stretch reads QSRTLRCRPSYH. The chain crosses the membrane as a helical span at residues 157–177; that stretch reads FIGSLAVADLLGSVIFVYSFL. At 178 to 189 the chain is on the extracellular side; that stretch reads DFHVFHRKDSSN. Residues 190-214 traverse the membrane as a helical segment; that stretch reads VFLFKLGGVTASFTASVGSLFLTAI. Residues 215-234 lie on the Cytoplasmic side of the membrane; sequence DRYISIHRPLAYKRIVTRTK. Residues 235–257 form a helical membrane-spanning segment; the sequence is AVIAFCVMWTIAIIIAVLPLLGW. Topologically, residues 258–275 are extracellular; the sequence is NCKKLKSVCSDIFPLIDE. The helical transmembrane segment at 276-301 threads the bilayer; the sequence is NYLMFWIGVTSILLLFIVYAYVYILW. Residues 302-346 are Cytoplasmic-facing; the sequence is KAHSHAVRMLQRGTQKSIIIHTSEDGKVQITRPEQTRMDIRLAKT. A helical transmembrane segment spans residues 347–367; it reads LVLILVVLIICWGPLLAIMVY. Over 368-379 the chain is Extracellular; the sequence is DVFGKMNNPIKT. A helical transmembrane segment spans residues 380-401; it reads VFAFCSMLCLMDSTVNPIIYAL. Residues 402–473 are Cytoplasmic-facing; it reads RSQDLRHAFL…VSTETSGEAV (72 aa). A lipid anchor (S-palmitoyl cysteine) is attached at C417.

The protein belongs to the G-protein coupled receptor 1 family. Post-translationally, palmitoylation at Cys-417 is important for recruitment at both plasma membrane and lipid rafts and association with G protein alpha subunits.

It is found in the cell membrane. The protein localises to the mitochondrion outer membrane. Its subcellular location is the cell projection. The protein resides in the axon. It localises to the presynapse. Its activity is regulated as follows. Hemopressin, a peptide derived from hemoglobin subunit alpha (HBA1 and/or HBA2), acts as an antagonist peptide: hemopressin-binding efficiently blocks cannabinoid receptor CNR1 and subsequent signaling. Its function is as follows. G-protein coupled receptor for cannabinoids. Mediates many cannabinoid-induced effects in the central nervous system (CNS), as well as in peripheral tissues. Regulates cellular respiration and energy production in response to cannabinoids. Signaling typically involves reduction in cyclic AMP. This Taricha granulosa (Roughskin newt) protein is Cannabinoid receptor 1 (CNR1).